The sequence spans 170 residues: Adenine phosphoribosyltransferase (170 aa).

The protein belongs to the purine/pyrimidine phosphoribosyltransferase family. As to quaternary structure, homodimer.

It is found in the cytoplasm. It carries out the reaction AMP + diphosphate = 5-phospho-alpha-D-ribose 1-diphosphate + adenine. It functions in the pathway purine metabolism; AMP biosynthesis via salvage pathway; AMP from adenine: step 1/1. In terms of biological role, catalyzes a salvage reaction resulting in the formation of AMP, that is energically less costly than de novo synthesis. This Pseudothermotoga lettingae (strain ATCC BAA-301 / DSM 14385 / NBRC 107922 / TMO) (Thermotoga lettingae) protein is Adenine phosphoribosyltransferase.